Reading from the N-terminus, the 179-residue chain is Peptide deformylase (179 aa).

Fe cation-binding residues include Cys-103 and His-145. Residue Glu-146 is part of the active site. His-149 is a Fe cation binding site.

This sequence belongs to the polypeptide deformylase family. The cofactor is Fe(2+).

It carries out the reaction N-terminal N-formyl-L-methionyl-[peptide] + H2O = N-terminal L-methionyl-[peptide] + formate. In terms of biological role, removes the formyl group from the N-terminal Met of newly synthesized proteins. Requires at least a dipeptide for an efficient rate of reaction. N-terminal L-methionine is a prerequisite for activity but the enzyme has broad specificity at other positions. The protein is Peptide deformylase of Leptospira biflexa serovar Patoc (strain Patoc 1 / Ames).